We begin with the raw amino-acid sequence, 128 residues long: Orchestin (128 aa).

Residues 1–20 (MNKVFIIGVCLFIVSQAVLA) form the signal peptide. The interval 23 to 95 (WDSDESSDER…DEDSDDSQES (73 aa)) is disordered. Composition is skewed to basic and acidic residues over residues 30-49 (DERLSDRSDESREEPRKLVV) and 56-81 (EDSNESAEVRRRDDSRESEEEPRKLS). Acidic residues predominate over residues 84–93 (TSDEDSDDSQ).

Post-translationally, phosphorylated on Ser and Tyr residues. Calcium-binding activity is dependent on serine phosphorylation but not on tyrosine phosphorylation. As to expression, posterior caeca epithelium of the gut.

It localises to the secreted. Its function is as follows. Plays a role in cuticle calcification. May induce precipitation of the calcium stored in the posterior caeca as calcium carbonate. The polypeptide is Orchestin (Cryptorchestia cavimana (Amphipod)).